Reading from the N-terminus, the 413-residue chain is Tryptophan synthase beta chain (413 aa).

Lys106 is subject to N6-(pyridoxal phosphate)lysine.

This sequence belongs to the TrpB family. As to quaternary structure, tetramer of two alpha and two beta chains. It depends on pyridoxal 5'-phosphate as a cofactor.

It carries out the reaction (1S,2R)-1-C-(indol-3-yl)glycerol 3-phosphate + L-serine = D-glyceraldehyde 3-phosphate + L-tryptophan + H2O. It functions in the pathway amino-acid biosynthesis; L-tryptophan biosynthesis; L-tryptophan from chorismate: step 5/5. In terms of biological role, the beta subunit is responsible for the synthesis of L-tryptophan from indole and L-serine. In Methylobacterium radiotolerans (strain ATCC 27329 / DSM 1819 / JCM 2831 / NBRC 15690 / NCIMB 10815 / 0-1), this protein is Tryptophan synthase beta chain.